A 508-amino-acid chain; its full sequence is Transcriptional regulatory protein moc3 (508 aa).

The tract at residues 15-43 (NRTGSINSNPLYIPNPNVEPTPKPTKRRT) is disordered. The segment at residues 46–76 (GCLTCRRRRIKCDETKPFCLNCTKTNRECEG) is a DNA-binding region (zn(2)-C6 fungal-type). Disordered regions lie at residues 110–146 (ASSSAQTGDTFSGSSQSNFNTNDLNQMTSSSNLSTVT) and 174–193 (NHNVPTNNSSSATSSTKPSV). A compositionally biased stretch (low complexity) spans 176-193 (NVPTNNSSSATSSTKPSV).

As to quaternary structure, interacts with zfs1.

It is found in the nucleus. Its function is as follows. Induces sexual development and ascus formation. Also involved in calcium homeostasis. The polypeptide is Transcriptional regulatory protein moc3 (moc3) (Schizosaccharomyces pombe (strain 972 / ATCC 24843) (Fission yeast)).